Here is a 1434-residue protein sequence, read N- to C-terminus: Probable ATP-dependent RNA helicase spindle-E (1434 aa).

The disordered stretch occupies residues 66-86 (VGGPSNTKRTKTLDELESDDD). The 168-residue stretch at 127–294 (MKAIKENPVV…FASCKSMPPV (168 aa)) folds into the Helicase ATP-binding domain. ATP is bound at residue 140 to 147 (GETGCGKT). The DEAH box motif lies at 240–243 (DEVH). Residues 354-526 (QSEQSYEEAK…SSVLKAKELD (173 aa)) form the Helicase C-terminal domain. Residues 938-1001 (ASAITKGLQL…RLMRHELRRD (64 aa)) enclose the Tudor domain.

It belongs to the DEAD box helicase family. DEAH subfamily.

It localises to the cytoplasm. The enzyme catalyses ATP + H2O = ADP + phosphate + H(+). Probable ATP-binding RNA helicase which plays a central role during spermatogenesis and oogenesis by repressing transposable elements and preventing their mobilization, which is essential for the germline integrity. Acts via the piRNA metabolic process, which mediates the repression of transposable elements during meiosis by forming complexes composed of piRNAs and Piwi and govern the methylation and subsequent repression of transposons. Involved in the repression of LTR retrotransposon copia. Also involved in telomere regulation by repressing specialized telomeric retroelements HeT-A, TAHRE, and TART; Drosophila telomeres being maintained by transposition of specialized telomeric retroelements. Involved in telomeric trans-silencing, a repression mechanism by which a transposon or a transgene inserted in subtelomeric heterochromatin has the capacity to repress in trans in the female germline, a homologous transposon, or transgene located in euchromatin. Involved in the repression of testis-expressed Stellate genes by the homologous Su(Ste) repeats. Required for anteroposterior and dorsoventral axis formation during oogenesis. In Drosophila grimshawi (Hawaiian fruit fly), this protein is Probable ATP-dependent RNA helicase spindle-E (spn-E).